Consider the following 2507-residue polypeptide: Highly reducing polyketide synthase lcsB (2507 aa).

A Ketosynthase family 3 (KS3) domain is found at 2–393 (AEPIAVVGMA…GVNAHVIVES (392 aa)). Residues 399–501 (NHDRGLSNGS…RNGYSGDDVE (103 aa)) form a disordered region. Polar residues-rich tracts occupy residues 405-414 (SNGSTTSSSP) and 470-488 (NDTP…TSHT). The tract at residues 581–900 (WVFTGQGAQW…DESLLQLAGK (320 aa)) is malonyl-CoA:ACP transacylase (MAT) domain. The segment at 953–1080 (HELLGSRVTE…GEARASVDKA (128 aa)) is N-terminal hotdog fold. Residues 953 to 1232 (HELLGSRVTE…FKASALTRSD (280 aa)) form a dehydratase (DH) domain region. The PKS/mFAS DH domain maps to 953–1234 (HELLGSRVTE…ASALTRSDDE (282 aa)). His984 serves as the catalytic Proton acceptor; for dehydratase activity. The segment at 1092-1234 (ARTVDANEWY…ASALTRSDDE (143 aa)) is C-terminal hotdog fold. The active-site Proton donor; for dehydratase activity is Asp1151. Residues 1402 to 1570 (LGHTNPRLRI…EMVAAGFAEP (169 aa)) form a methyltransferase (CMet) domain region. Residues 1793–2105 (GLLHTMGWSQ…GGRHIGKIIV (313 aa)) form an enoyl reductase (ER) (ER) domain region. Positions 2130 to 2303 (SYLLVGGLGG…ASVIDIGVMG (174 aa)) are ketoreductase (KR) domain. The 79-residue stretch at 2425 to 2503 (EESTVIIATA…SLGDYIRTAL (79 aa)) folds into the Carrier domain. Ser2463 is subject to O-(pantetheine 4'-phosphoryl)serine.

It functions in the pathway secondary metabolite biosynthesis. Its function is as follows. Highly reducing polyketide synthase; part of the gene cluster that mediates the biosynthesis of the lipopeptide antibiotics leucinostatins that show extensive biological activities, including antimalarial, antiviral, antibacterial, antifungal, and antitumor activities, as well as phytotoxic. Leucinostatin A contains nine amino acid residues, including the unusual amino acid 4-methyl-L-proline (MePro), 2-amino-6-hydroxy-4-methyl-8-oxodecanoic acid (AHyMeOA), 3-hydroxyleucine (HyLeu), alpha-aminoisobutyric acid (AIB), beta-Ala, a 4-methylhex-2-enoic acid at the N-terminus as well as a N1,N1-dimethylpropane-1,2-diamine (DPD) at the C-terminus. The biosynthesis of leucinostatins is probably initiated with the assembly of 4-methylhex-2-enoic acid by a reducing PKS. Two reducing polyketide synthases, lcsB and lcsC, have been identified in the cluster and it is not clear which is the one that assembles 4-methylhex-2-enoic acid since both contain KS, AT, DH, cMT, ER, KR and ACP domains. The polyketide residue might be transferred to the NRPS lcsA, mediated by two additional enzymes, the acyl-CoA ligase lcsD and the thioesterase lcsE. The linear polyketide carboxylic acid, which is released from PKS, is converted to a CoA thioester by lcsD, and then lcsE hydrolyzes the thiol bond and shuttles the polyketide intermediate to lcsA. The C domain of the first module catalyzed the condensation of 4-methylhex-2-enoic acid and MePro carried by domain A1, followed by successive condensations of nine amino acids to trigger the elongation of the linear peptide. A5 and A6 domains of lcsA are proposed to incorporate leucine, A2 AHyMeOA, and A3 incorporates HyLeu. A4, A7 and A8 incorporate AIB. The AHyMeOA in leucinostatin A activated by the A2 might be produced by the second PKS (lcsB or lcsC) present within the cluster. The MePro is probably produced via leucine cyclization and may originate from a separate pathway, independent of the cluster. Another nonproteinogenic amino acid, beta-Ala, could be produced by an aspartic acid decarboxylase also localized outside of the cluster. Two candidates are VFPBJ_01400 and VFPBJ_10476. The final peptide scaffold may be released by the NAD(P)H-dependent thioester reductase (TE) at the C-terminal region of lcsA. Transamination of the lcsA product by the transaminase lcsP may produce DPD at the C-terminus. Further hydroxylation steps performed alternatively by the cytochrome P450 monooxygenases lcsI, lcsK andr lcsN then yield the non-methylated leucinostatins precursor. It is also possible that leucines can be hydroxylated prior to their incorporation into the peptide. Varying extents of methylation then lead to the formation of leucinostatins A and B. The sequence is that of Highly reducing polyketide synthase lcsB from Purpureocillium lilacinum (Paecilomyces lilacinus).